Here is a 268-residue protein sequence, read N- to C-terminus: Probable ribosomal RNA small subunit methyltransferase A (268 aa).

S-adenosyl-L-methionine-binding residues include His23, Leu25, Gly50, Glu71, Asp95, and Asn110.

This sequence belongs to the class I-like SAM-binding methyltransferase superfamily. rRNA adenine N(6)-methyltransferase family. RsmA subfamily.

The protein localises to the cytoplasm. Functionally, specifically dimethylates two adjacent adenosines in the loop of a conserved hairpin near the 3'-end of 16S rRNA in the 30S particle. May play a critical role in biogenesis of 30S subunits. In Pyrococcus horikoshii (strain ATCC 700860 / DSM 12428 / JCM 9974 / NBRC 100139 / OT-3), this protein is Probable ribosomal RNA small subunit methyltransferase A.